The primary structure comprises 275 residues: Nitrogenase iron protein 3 (275 aa).

9–16 (GKGGIGKS) is a binding site for ATP. C97 lines the [4Fe-4S] cluster pocket. R100 is subject to ADP-ribosylarginine; by dinitrogenase reductase ADP-ribosyltransferase. C132 lines the [4Fe-4S] cluster pocket.

This sequence belongs to the NifH/BchL/ChlL family. In terms of assembly, homodimer. [4Fe-4S] cluster is required as a cofactor. The reversible ADP-ribosylation of Arg-100 inactivates the nitrogenase reductase and regulates nitrogenase activity.

It catalyses the reaction N2 + 8 reduced [2Fe-2S]-[ferredoxin] + 16 ATP + 16 H2O = H2 + 8 oxidized [2Fe-2S]-[ferredoxin] + 2 NH4(+) + 16 ADP + 16 phosphate + 6 H(+). Its function is as follows. The key enzymatic reactions in nitrogen fixation are catalyzed by the nitrogenase complex, which has 2 components: the iron protein (component 2) and a component 1 which is either a molybdenum-iron protein, a vanadium-iron, or an iron-iron protein. This chain is Nitrogenase iron protein 3 (anfH), found in Azotobacter vinelandii.